A 366-amino-acid chain; its full sequence is tRNA-specific 2-thiouridylase MnmA (366 aa).

ATP is bound by residues G10–S17 and I36. The active-site Nucleophile is the C98. C98 and C194 are disulfide-bonded. G122 contributes to the ATP binding site. The segment at K144 to Q146 is interaction with tRNA. C194 (cysteine persulfide intermediate) is an active-site residue. The tract at residues R303 to Y304 is interaction with tRNA.

Belongs to the MnmA/TRMU family.

Its subcellular location is the cytoplasm. It catalyses the reaction S-sulfanyl-L-cysteinyl-[protein] + uridine(34) in tRNA + AH2 + ATP = 2-thiouridine(34) in tRNA + L-cysteinyl-[protein] + A + AMP + diphosphate + H(+). In terms of biological role, catalyzes the 2-thiolation of uridine at the wobble position (U34) of tRNA, leading to the formation of s(2)U34. The chain is tRNA-specific 2-thiouridylase MnmA from Chlorobaculum tepidum (strain ATCC 49652 / DSM 12025 / NBRC 103806 / TLS) (Chlorobium tepidum).